Consider the following 149-residue polypeptide: Ribonuclease H (149 aa).

The region spanning 1–142 (MSTITIHTDG…ADELAREGLA (142 aa)) is the RNase H type-1 domain. Positions 9, 47, 70, and 134 each coordinate Mg(2+). A disordered region spans residues 124-149 (HAGDPGNERADELAREGLAEARGRQP). The segment covering 129–149 (GNERADELAREGLAEARGRQP) has biased composition (basic and acidic residues).

This sequence belongs to the RNase H family. Monomer. The cofactor is Mg(2+).

It localises to the cytoplasm. The enzyme catalyses Endonucleolytic cleavage to 5'-phosphomonoester.. Functionally, endonuclease that specifically degrades the RNA of RNA-DNA hybrids. The protein is Ribonuclease H of Maricaulis maris (strain MCS10) (Caulobacter maris).